A 427-amino-acid polypeptide reads, in one-letter code: MALLKSRLLVGVARCQPCLAAVQGRASSWWSHVEMGPPDPILGVTEAFKRDTNSKKMNLGVGAYRDDNGKPYVLSSVRKAEAQLASKNLDKEYLPIGGLAEFARASAQLALGENCDAIQSGRFITVQTISGTGSLRVGANFLQRFYKYSRDVYLPKPSWGNHTPIFRDAGLEVKGYRYYDPKTCGFDFTGALDDISKIPEQSIILFHACAHNPTGVDPKQEQWKELAALIKSRRLFPFFDMAYQGFASGDTNRDAWAVRHFIQEGINVVLSQSYAKNMGLYGERVGAFTVVCSDAEEAKRVESQLKILIRPMYSNPPLNGARIAAAILTQPDLRKEWLQEVKGMANRIISMREQLVSNLKKEGSIHNWQHISDQIGMFCFTGLRPEQVERLIKEFSIYMTKDGRISVAGVTSANNGYLAHAIHQVTK.

A mitochondrion-targeting transit peptide spans 1–26 (MALLKSRLLVGVARCQPCLAAVQGRA). Substrate is bound by residues Gly-62, Trp-159, and Asn-212. Lys-276 is modified (N6-(pyridoxal phosphate)lysine). Arg-404 provides a ligand contact to substrate.

The protein belongs to the class-I pyridoxal-phosphate-dependent aminotransferase family. As to quaternary structure, homodimer. Requires pyridoxal 5'-phosphate as cofactor.

The protein localises to the mitochondrion matrix. The catalysed reaction is L-aspartate + 2-oxoglutarate = oxaloacetate + L-glutamate. It catalyses the reaction L-kynurenine + 2-oxoglutarate = kynurenate + L-glutamate + H2O. Catalyzes the irreversible transamination of the L-tryptophan metabolite L-kynurenine to form kynurenic acid (KA). As a member of the malate-aspartate shuttle, it has a key role in the intracellular NAD(H) redox balance. Is important for metabolite exchange between mitochondria and cytosol, and for amino acid metabolism. This chain is Aspartate aminotransferase, mitochondrial (got2), found in Xenopus tropicalis (Western clawed frog).